The following is a 154-amino-acid chain: Small ribosomal subunit protein uS15 (154 aa).

Over residues 1–11 (MSRLHAHKRYH) the composition is skewed to basic residues. Residues 1–24 (MSRLHAHKRYHGQSGSKRPLRTTK) are disordered.

The protein belongs to the universal ribosomal protein uS15 family. Part of the 30S ribosomal subunit.

This is Small ribosomal subunit protein uS15 from Nanoarchaeum equitans (strain Kin4-M).